The following is a 115-amino-acid chain: Small ribosomal subunit protein bS18c (115 aa).

A disordered region spans residues 91-115 (TNALKARTQNKDQKKEKFQINKKKK). A compositionally biased stretch (basic and acidic residues) spans 99-109 (QNKDQKKEKFQ).

It belongs to the bacterial ribosomal protein bS18 family. In terms of assembly, part of the 30S ribosomal subunit.

Its subcellular location is the plastid. It is found in the chloroplast. This is Small ribosomal subunit protein bS18c from Ipomoea purpurea (Common morning glory).